Here is a 903-residue protein sequence, read N- to C-terminus: MSNVRISEIANELGYPSKEIVEKAQELGLKVKTHSNAVSLEEAEAIYEYVQSGVIPEKFKKEKPKAKPKKEAKEPSEKEVGKKQTKAKEEKPAKASTTQKKDTKSHKIGETKAKKDQESVKKQKVEVQPKQEQTKQELQPKEAEFKSEVKDEISEPQKPKESLADVSQRRRGLMIVKKKKEFESAPVRRDENRVKSTDAVEINSLKNMFASSDENLARKKKKDKKPVVATKKDSAQKMDLLGSSDFGDIVIEDEDVVVLPDFSFKTPTPQPMQKTKQPNVLKPTINNTINPFGEGGIQRRARKKHKKPENKQNSEAVTSINIPKEIRVYEFAEKLNKQPSEIIGKLFMLGMMTTKNDFLDEDAIEILADEFNVEVNIIDDQKEFDYVAAYEEEVRDDENLLPRAPVITIMGHVDHGKTSLLDYIRKSRVAAGEAGGITQHVGAYMVNKNGKNITFIDTPGHEAFTAMRARGAGVTDIVIIVVAADDGVKPQTKEAVNHAKAAGVPIIIAINKMDKEAANPDLVKTGLAELDIMPTEWGGKYEFVPISAKTGMGIDDLLEIVLLQAEILELKANPKASAKASVIESSLQKGRGPVATIIVENGTLRVGDTVVAGVAYGKIRSLLDDQGRPLQEIKPGECGVIVGLSEIAEAGETLIGVKTDKEAREYAQKKAEYLRQKELSKSTKVSLDELSAKIAEGELKTLPVIVKADVGGSLEALKASLEKLANNEIKVDIIHSGVGGITQSDVALASASKDCVILGFNIRPTGEIKEKAKESGVEIKTYNVIYNLIDDVKALLGGLMSPIIREEQLGQAQVRQVINVPKIGAIAGCLVTEGTINRGAKIRLIRDGVVVYEGMVSSLKRFKDDVKEVAKGYECGVGIEGCNDIRENDYIESFKEIEEQAKL.

2 disordered regions span residues 57–171 (EKFK…QRRR) and 267–318 (PTPQ…EAVT). Basic and acidic residues predominate over residues 69–163 (KKEAKEPSEK…SEPQKPKESL (95 aa)). Residues 267-278 (PTPQPMQKTKQP) are compositionally biased toward low complexity. Positions 299–308 (RRARKKHKKP) are enriched in basic residues. Positions 402-569 (PRAPVITIMG…IVLLQAEILE (168 aa)) constitute a tr-type G domain. A G1 region spans residues 411–418 (GHVDHGKT). A GTP-binding site is contributed by 411 to 418 (GHVDHGKT). A G2 region spans residues 436 to 440 (GITQH). The tract at residues 457 to 460 (DTPG) is G3. Residues 457 to 461 (DTPGH) and 511 to 514 (NKMD) each bind GTP. The tract at residues 511-514 (NKMD) is G4. Positions 547–549 (SAK) are G5.

The protein belongs to the TRAFAC class translation factor GTPase superfamily. Classic translation factor GTPase family. IF-2 subfamily.

Its subcellular location is the cytoplasm. Its function is as follows. One of the essential components for the initiation of protein synthesis. Protects formylmethionyl-tRNA from spontaneous hydrolysis and promotes its binding to the 30S ribosomal subunits. Also involved in the hydrolysis of GTP during the formation of the 70S ribosomal complex. The chain is Translation initiation factor IF-2 from Campylobacter curvus (strain 525.92).